The following is a 202-amino-acid chain: MPSGSLWRVLGLCLLSVGAWGQEDNEDPLEPSPQTSASARYKVSISGTTVVLTCPEDLGSESIKWERNGDLLPNEYGEQLFLDDFSEMENSGYYACYTSNSLEKNYLYLKARVCQNCVEVDTMTAVAIVVADVCITLGFLLLVYYWSKNKKASSVTMMRGPGAGGRPRGQNKEKPPPVPNPDYEPIRKGQQDLYSGLNQRGI.

The N-terminal stretch at 1-21 (MPSGSLWRVLGLCLLSVGAWG) is a signal peptide. The Extracellular portion of the chain corresponds to 22–125 (QEDNEDPLEP…NCVEVDTMTA (104 aa)). The region spanning 33-107 (PQTSASARYK…TSNSLEKNYL (75 aa)) is the Ig-like domain. An intrachain disulfide couples C54 to C96. Residues 126–146 (VAIVVADVCITLGFLLLVYYW) traverse the membrane as a helical segment. At 147 to 202 (SKNKKASSVTMMRGPGAGGRPRGQNKEKPPPVPNPDYEPIRKGQQDLYSGLNQRGI) the chain is on the cytoplasmic side. A disordered region spans residues 156-202 (TMMRGPGAGGRPRGQNKEKPPPVPNPDYEPIRKGQQDLYSGLNQRGI). The NUMB-binding region stretch occupies residues 170–187 (QNKEKPPPVPNPDYEPIR). The region spanning 173–200 (EKPPPVPNPDYEPIRKGQQDLYSGLNQR) is the ITAM domain. The segment at 174 to 181 (KPPPVPNP) is proline-rich sequence. Y183 and Y194 each carry phosphotyrosine. Polar residues predominate over residues 192-202 (DLYSGLNQRGI).

In terms of assembly, the TCR-CD3 complex is composed of a CD3D/CD3E and a CD3G/CD3E heterodimers that preferentially associate with TCRalpha and TCRbeta, respectively, to form TCRalpha/CD3E/CD3G and TCRbeta/CD3G/CD3E trimers. In turn, the hexamer interacts with CD3Z homodimer to form the TCR-CD3 complex. Alternatively, TCRalpha and TCRbeta can be replaced by TCRgamma and TCRdelta. Interacts with CD6. Interacts (via Proline-rich sequence) with NCK1; the interaction is ligand dependent but independent of tyrosine kinase activation. In terms of processing, phosphorylated on Tyr residues after T-cell receptor triggering by LCK in association with CD4/CD8.

It is found in the cell membrane. Functionally, part of the TCR-CD3 complex present on T-lymphocyte cell surface that plays an essential role in adaptive immune response. When antigen presenting cells (APCs) activate T-cell receptor (TCR), TCR-mediated signals are transmitted across the cell membrane by the CD3 chains CD3D, CD3E, CD3G and CD3Z. All CD3 chains contain immunoreceptor tyrosine-based activation motifs (ITAMs) in their cytoplasmic domain. Upon TCR engagement, these motifs become phosphorylated by Src family protein tyrosine kinases LCK and FYN, resulting in the activation of downstream signaling pathways. In addition of this role of signal transduction in T-cell activation, CD3E plays an essential role in correct T-cell development. Also participates in internalization and cell surface down-regulation of TCR-CD3 complexes via endocytosis sequences present in CD3E cytosolic region. In addition to its role as a TCR coreceptor, it serves as a receptor for ITPRIPL1. Ligand recognition inhibits T-cell activation by promoting interaction with NCK1, which prevents CD3E-ZAP70 interaction and blocks the ERK-NFkB signaling cascade and calcium influx. This chain is T-cell surface glycoprotein CD3 epsilon chain (CD3E), found in Felis catus (Cat).